Here is a 407-residue protein sequence, read N- to C-terminus: Spore germination protein KC (407 aa).

A signal peptide spans Met1 to Gly20. Cys21 carries the N-palmitoyl cysteine lipid modification. A lipid anchor (S-diacylglycerol cysteine) is attached at Cys21.

Belongs to the GerABKC lipoprotein family.

It localises to the cell membrane. Functionally, involved in the germination response to the combination of glucose, fructose, L-asparagine, and KCl. This chain is Spore germination protein KC (gerKC), found in Bacillus subtilis (strain 168).